The primary structure comprises 1263 residues: MRGLPRGRGLMRARGRGRAAPTGGRGRGRGGAHRGRGRPRSLLSLPRAQASWAPQLPAGLTGPPVPCLPSQGEAPAEMGALLLEKEPRGAAERVHSSLGDTPQSEETLPKANPDSLEPAGPSSPASVTVTVGDEGADTPVGAASLIGDEPESLEGDGGRIVLGHATKSFPSSPSKGGACPSRAKMSMTGAGKSPPSVQSLAMRLLSMPGAQGAATAGPEPSPATTAAQEGQPKVHRARKTMSKPSNGQPPIPEKRPPEVQHFRMSDDMHLGKVTSDVAKRRKLNSGSLSEDLGSAGGSGDIILEKGEPRPLEEWETVVGDDFSLYYDAYSVDERVDSDSKSEVEALAEQLSEEEEEEEEEEEEEEEEEEEEEEEEEDEESGNQSDRSGSSGRRKAKKKWRKDSPWVKPSRKRRKREPPRAKEPRGVNGVGSSGPSEYMEVPLGSLELPSEGTLSPNHAGVSNDTSSLETERGFEELPLCSCRMEAPKIDRISERAGHKCMATESVDGELLGCNAAILKRETMRPSSRVALMVLCEAHRARMVKHHCCPGCGYFCTAGTFLECHPDFRVAHRFHKACVSQLNGMVFCPHCGEDASEAQEVTIPRGDGGTPPIGTAAPALPPLAHDAPGRADTSQPSARMRGHGEPRRPPCDPLADTIDSSGPSLTLPNGGCLSAVGLPPGPGREALEKALVIQESERRKKLRFHPRQLYLSVKQGELQKVILMLLDNLDPNFQSDQQSKRTPLHAAAQKGSVEICHVLLQAGANINAVDKQQRTPLMEAVVNNHLEVARYMVQLGGCVYSKEEDGSTCLHHAAKIGNLEMVSLLLSTGQVDVNAQDSGGWTPIIWAAEHKHIDVIRMLLTRGADVTLTDNEENICLHWASFTGSAAIAEVLLNAQCDLHAVNYHGDTPLHIAARESYHDCVLLFLSRGANPELRNKEGDTAWDLTPERSDVWFALQLNRKLRLGVGNRAVRTEKIICRDVARGYENVPIPCVNGVDGEPCPEDYKYISENCETSTMNIDRNITHLQHCTCVDDCSSSNCLCGQLSIRCWYDKDGRLLQEFNKIEPPLIFECNQACSCWRSCKNRVVQSGIKVRLQLYRTAKMGWGVRALQTIPQGTFICEYVGELISDAEADVREDDSYLFDLDNKDGEVYCIDARYYGNISRFINHLCDPNIIPVRVFMLHQDLRFPRIAFFSSRDIRTGEELGFDYGDRFWDIKSKYFTCQCGSEKCKHSAEAIALEQSRLARLDPHPELLPDLSSLPPINT.

2 disordered regions span residues 1 to 314 and 332 to 439; these read MRGL…LEEW and DERV…EYME. A compositionally biased stretch (basic residues) spans 26–39; sequence GRGRGGAHRGRGRP. An Asymmetric dimethylarginine modification is found at Arg-40. Residues 83 to 95 show a composition bias toward basic and acidic residues; sequence LEKEPRGAAERVH. Ser-97 carries the phosphoserine modification. Phosphothreonine is present on Thr-101. A phosphoserine mark is found at Ser-104 and Ser-193. Lys-239 is subject to N6,N6,N6-trimethyllysine; by EHMT2; alternate. At Lys-239 the chain carries N6,N6-dimethyllysine; by EHMT2; alternate. Positions 252–270 are enriched in basic and acidic residues; the sequence is PEKRPPEVQHFRMSDDMHL. Glycyl lysine isopeptide (Lys-Gly) (interchain with G-Cter in SUMO2) cross-links involve residues Lys-272 and Lys-282. 3 positions are modified to phosphoserine: Ser-285, Ser-294, and Ser-298. Basic and acidic residues-rich tracts occupy residues 302–312 and 332–343; these read ILEKGEPRPLE and DERVDSDSKSEV. Residues 350–380 are compositionally biased toward acidic residues; it reads LSEEEEEEEEEEEEEEEEEEEEEEEEEDEES. The segment covering 391–400 has biased composition (basic residues); it reads GRRKAKKKWR. A phosphoserine mark is found at Ser-403, Ser-465, and Ser-466. A Phosphothreonine modification is found at Thr-608. Residues 621 to 647 are disordered; sequence LAHDAPGRADTSQPSARMRGHGEPRRP. Lys-687 is covalently cross-linked (Glycyl lysine isopeptide (Lys-Gly) (interchain with G-Cter in SUMO2)). ANK repeat units follow at residues 702-731, 737-766, 770-799, 803-833, 837-866, 870-899, and 903-932; these read FHPR…DPNF, SKRT…NINA, QQRT…CVYS, DGST…DVNA, GGWT…DVTL, EENI…DLHA, and HGDT…NPEL. The segment at 870 to 872 is histone H3K9me binding; that stretch reads EEN. Positions 1025 to 1088 constitute a Pre-SET domain; the sequence is QHCTCVDDCS…SCKNRVVQSG (64 aa). Positions 1027, 1029, 1033, 1038, 1040, 1070, 1074, 1076, and 1080 each coordinate Zn(2+). The region spanning 1091 to 1208 is the SET domain; sequence VRLQLYRTAK…TGEELGFDYG (118 aa). S-adenosyl-L-methionine-binding positions include 1101-1103, Tyr-1138, and 1165-1166; these read MGW and NH. Positions 1127–1146 are interaction with histone H3; it reads DAEADVREDDSYLFDLDNKD. Residue Cys-1168 coordinates Zn(2+). The interaction with histone H3 stretch occupies residues 1207-1210; it reads YGDR. The Post-SET domain maps to 1217 to 1233; that stretch reads KYFTCQCGSEKCKHSAE. Zn(2+) is bound by residues Cys-1221, Cys-1223, and Cys-1228. Ser-1257 carries the phosphoserine modification. At Thr-1263 the chain carries Phosphothreonine.

Belongs to the class V-like SAM-binding methyltransferase superfamily. Histone-lysine methyltransferase family. Suvar3-9 subfamily. Heterodimer; heterodimerizes with EHMT1/GLP. Interacts with GFI1B and WIZ. Part of the E2F6.com-1 complex in G0 phase composed of E2F6, MGA, MAX, TFDP1, CBX3, BAT8, EHMT1, RING1, RNF2, MBLR, L3MBTL2 and YAF2. Part of a complex composed of TRIM28, HDAC1, HDAC2 and EHMT2. Interacts with UHRF1. Interacts with CDYL. Interacts with REST only in the presence of CDYL. Part of a complex containing at least CDYL, REST, WIZ, SETB1, EHMT1 and EHMT2. Interacts with PRDM9 and CDYL; interaction only takes place when PRDM9 is bound to hotspot DNA. Interacts with SMYD5. In terms of processing, methylated at Lys-239; automethylated. In terms of tissue distribution, ubiquitous.

It localises to the nucleus. The protein resides in the chromosome. It catalyses the reaction N(6)-methyl-L-lysyl(9)-[histone H3] + S-adenosyl-L-methionine = N(6),N(6)-dimethyl-L-lysyl(9)-[histone H3] + S-adenosyl-L-homocysteine + H(+). The enzyme catalyses L-lysyl(9)-[histone H3] + S-adenosyl-L-methionine = N(6)-methyl-L-lysyl(9)-[histone H3] + S-adenosyl-L-homocysteine + H(+). In terms of biological role, histone methyltransferase that specifically mono- and dimethylates 'Lys-9' of histone H3 (H3K9me1 and H3K9me2, respectively) in euchromatin. H3K9me represents a specific tag for epigenetic transcriptional repression by recruiting HP1 proteins to methylated histones. Also mediates monomethylation of 'Lys-56' of histone H3 (H3K56me1) in G1 phase, leading to promote interaction between histone H3 and PCNA and regulating DNA replication. Also weakly methylates 'Lys-27' of histone H3 (H3K27me). Also required for DNA methylation, the histone methyltransferase activity is not required for DNA methylation, suggesting that these 2 activities function independently. Probably targeted to histone H3 by different DNA-binding proteins like E2F6, MGA, MAX and/or DP1. May also methylate histone H1. In addition to the histone methyltransferase activity, also methylates non-histone proteins: mediates dimethylation of 'Lys-373' of p53/TP53. Also methylates CDYL, WIZ, ACIN1, DNMT1, HDAC1, ERCC6, KLF12 and itself. This Mus musculus (Mouse) protein is Histone-lysine N-methyltransferase EHMT2 (Ehmt2).